The chain runs to 243 residues: Pyridoxine 5'-phosphate synthase (243 aa).

Asn-9 provides a ligand contact to 3-amino-2-oxopropyl phosphate. 11–12 (DH) contacts 1-deoxy-D-xylulose 5-phosphate. A 3-amino-2-oxopropyl phosphate-binding site is contributed by Arg-20. His-45 serves as the catalytic Proton acceptor. Residues Arg-47 and His-52 each contribute to the 1-deoxy-D-xylulose 5-phosphate site. Glu-72 acts as the Proton acceptor in catalysis. Position 102 (Thr-102) interacts with 1-deoxy-D-xylulose 5-phosphate. His-193 acts as the Proton donor in catalysis. Residues Gly-194 and 215–216 (GH) contribute to the 3-amino-2-oxopropyl phosphate site.

The protein belongs to the PNP synthase family. As to quaternary structure, homooctamer; tetramer of dimers.

It localises to the cytoplasm. It carries out the reaction 3-amino-2-oxopropyl phosphate + 1-deoxy-D-xylulose 5-phosphate = pyridoxine 5'-phosphate + phosphate + 2 H2O + H(+). The protein operates within cofactor biosynthesis; pyridoxine 5'-phosphate biosynthesis; pyridoxine 5'-phosphate from D-erythrose 4-phosphate: step 5/5. In terms of biological role, catalyzes the complicated ring closure reaction between the two acyclic compounds 1-deoxy-D-xylulose-5-phosphate (DXP) and 3-amino-2-oxopropyl phosphate (1-amino-acetone-3-phosphate or AAP) to form pyridoxine 5'-phosphate (PNP) and inorganic phosphate. The polypeptide is Pyridoxine 5'-phosphate synthase (Pseudoalteromonas translucida (strain TAC 125)).